The chain runs to 344 residues: rRNA 2'-O-methyltransferase fibrillarin (344 aa).

The tract at residues Met1–Ile113 is disordered. A compositionally biased stretch (gly residues) spans Pro8 to Gly107. Arg9, Arg23, Arg25, Arg40, Arg42, Arg48, Arg51, Arg58, Arg63, Arg71, Arg77, Arg83, Arg88, Arg93, and Arg98 each carry asymmetric dimethylarginine. Residues Thr197–Thr198, Glu216–Phe217, Asp241–Ala242, and Asp261–Gln264 contribute to the S-adenosyl-L-methionine site.

This sequence belongs to the methyltransferase superfamily. Fibrillarin family. Component of box C/D small nucleolar ribonucleoprotein (snoRNP) particles. It is associated with the U3, U8 and U13 small nuclear RNAs. By homology to other fibrillarins, some or all of the N-terminal domain arginines are modified to asymmetric dimethylarginine (DMA).

The protein resides in the nucleus. The protein localises to the nucleolus. The enzyme catalyses L-glutaminyl-[histone H2A] + S-adenosyl-L-methionine = N(5)-methyl-L-glutaminyl-[histone H2A] + S-adenosyl-L-homocysteine + H(+). Functionally, S-adenosyl-L-methionine-dependent methyltransferase that has the ability to methylate both RNAs and proteins. Involved in pre-rRNA processing. Utilizes the methyl donor S-adenosyl-L-methionine to catalyze the site-specific 2'-hydroxyl methylation of ribose moieties in pre-ribosomal RNA. Site specificity is provided by a guide RNA that base pairs with the substrate. Methylation occurs at a characteristic distance from the sequence involved in base pairing with the guide RNA. Also acts as a protein methyltransferase by mediating methylation of 'Gln-105' of histone H2A (H2AQ105me), a modification that impairs binding of the FACT complex and is specifically present at 35S ribosomal DNA locus. The protein is rRNA 2'-O-methyltransferase fibrillarin of Drosophila melanogaster (Fruit fly).